The following is a 177-amino-acid chain: Large ribosomal subunit protein uL6 (177 aa).

The protein belongs to the universal ribosomal protein uL6 family. As to quaternary structure, part of the 50S ribosomal subunit.

Its function is as follows. This protein binds to the 23S rRNA, and is important in its secondary structure. It is located near the subunit interface in the base of the L7/L12 stalk, and near the tRNA binding site of the peptidyltransferase center. The protein is Large ribosomal subunit protein uL6 of Brucella melitensis biotype 1 (strain ATCC 23456 / CCUG 17765 / NCTC 10094 / 16M).